A 201-amino-acid polypeptide reads, in one-letter code: Alpha-1-acid glycoprotein 2 (201 aa).

The N-terminal stretch at 1–18 (MALSWVLTVLSLLPLLEA) is a signal peptide. Gln-19 is subject to Pyrrolidone carboxylic acid. 2 cysteine pairs are disulfide-bonded: Cys-23–Cys-165 and Cys-90–Cys-183. A glycan (N-linked (GlcNAc...) (complex) asparagine) is linked at Asn-33. N-linked (GlcNAc...) asparagine glycosylation is found at Asn-56, Asn-72, Asn-93, and Asn-103.

Belongs to the calycin superfamily. Lipocalin family. N-glycosylated. N-glycan heterogeneity at Asn-33: Hex5HexNAc4 (minor), Hex6HexNAc5 (major) and dHex1Hex6HexNAc5 (minor). As to expression, expressed by the liver and secreted in plasma.

It localises to the secreted. Functionally, functions as a transport protein in the blood stream. Binds various hydrophobic ligands in the interior of its beta-barrel domain. Also binds synthetic drugs and influences their distribution and availability. Appears to function in modulating the activity of the immune system during the acute-phase reaction. The protein is Alpha-1-acid glycoprotein 2 (ORM2) of Homo sapiens (Human).